The primary structure comprises 312 residues: Ornithine carbamoyltransferase (312 aa).

Carbamoyl phosphate contacts are provided by residues 50-53 (STRT), Gln77, Arg101, and 128-131 (HPCQ). L-ornithine is bound by residues Asn159, Asp223, and 227-228 (SM). Carbamoyl phosphate contacts are provided by residues 263 to 264 (CL) and Arg291.

Belongs to the aspartate/ornithine carbamoyltransferase superfamily. OTCase family.

Its subcellular location is the cytoplasm. The enzyme catalyses carbamoyl phosphate + L-ornithine = L-citrulline + phosphate + H(+). It participates in amino-acid biosynthesis; L-arginine biosynthesis; L-arginine from L-ornithine and carbamoyl phosphate: step 1/3. Reversibly catalyzes the transfer of the carbamoyl group from carbamoyl phosphate (CP) to the N(epsilon) atom of ornithine (ORN) to produce L-citrulline. The polypeptide is Ornithine carbamoyltransferase (Acidothermus cellulolyticus (strain ATCC 43068 / DSM 8971 / 11B)).